The sequence spans 275 residues: Envelope glycoprotein (275 aa).

3 disulfide bridges follow: Cys1/Cys10, Cys18/Cys27, and Cys58/Cys62. Asn122 carries N-linked (GlcNAc...) asparagine; by host glycosylation. Cystine bridges form between Cys164–Cys194, Cys187–Cys239, Cys204–Cys209, and Cys240–Cys245.

It belongs to the hantavirus envelope glycoprotein family. Homodimer. Homotetramer; forms heterotetrameric Gn-Gc spikes in the pre-fusion conformation. Homotrimer; forms homotrimer in the post-fusion conformation at acidic pH. Interacts (via C-terminus) with the nucleoprotein. In terms of processing, envelope polyprotein precursor is quickly cleaved in vivo just after synthesis, presumably by host signal peptidase.

The protein resides in the virion membrane. It is found in the host cell surface. Its subcellular location is the host Golgi apparatus membrane. The protein localises to the host endoplasmic reticulum membrane. In terms of biological role, forms homotetramers with glycoprotein N at the surface of the virion. Attaches the virion to host cell receptors including integrin ITGAV/ITGB3. This attachment induces virion internalization predominantly through clathrin-dependent endocytosis. Class II fusion protein that promotes fusion of viral membrane with host endosomal membrane after endocytosis of the virion. The polypeptide is Envelope glycoprotein (GP) (Homo sapiens (Human)).